A 782-amino-acid chain; its full sequence is General transcription and DNA repair factor IIH helicase/translocase subunit XPB (782 aa).

Positions 1 to 11 are enriched in basic and acidic residues; the sequence is MGKRDRADRDK. Disordered regions lie at residues 1-51 and 220-240; these read MGKR…ESGT and ISKT…DPQG. A Nuclear localization signal motif is present at residues 6–18; sequence RADRDKKKSRKRH. Residues 21–30 are compositionally biased toward acidic residues; that stretch reads DEEDDEEDAP. The 162-residue stretch at 327–488 folds into the Helicase ATP-binding domain; sequence MFGNGRARSG…DLNFLIGPKL (162 aa). 340–347 serves as a coordination point for ATP; the sequence is LPCGAGKS. Positions 441–444 match the DEVH box motif; the sequence is DEVH. A Helicase C-terminal domain is found at 542-702; it reads RACQFLIKFH…LAGMEEEDLA (161 aa). Phosphoserine is present on Ser686. Phosphoserine; by CK2 is present on Ser751.

Belongs to the helicase family. RAD25/XPB subfamily. As to quaternary structure, component of the 7-subunit TFIIH core complex composed of XPB/ERCC3, XPD/ERCC2, GTF2H1, GTF2H2, GTF2H3, GTF2H4 and GTF2H5, which is active in NER. The core complex associates with the 3-subunit CDK-activating kinase (CAK) module composed of CCNH/cyclin H, CDK7 and MNAT1 to form the 10-subunit holoenzyme (holo-TFIIH) active in transcription. Interacts with PUF60. Interacts with ATF7IP. Interacts with KAT2A; leading to KAT2A recruitment to promoters and acetylation of histones. Part of TBP-based Pol II pre-initiation complex (PIC), in which Pol II core assembles with general transcription factors and other specific initiation factors including GTF2E1, GTF2E2, GTF2F1, GTF2F2, TCEA1, ERCC2, ERCC3, GTF2H2, GTF2H3, GTF2H4, GTF2H5, GTF2A1, GTF2A2, GTF2B and TBP; this large multi-subunit PIC complex mediates DNA unwinding and targets Pol II core to the transcription start site where the first phosphodiester bond forms. Post-translationally, phosphorylation on Ser-751 by CK2 controls the 5'-excision activity of ERCC1-XPF endonuclease; phosphorylated protein inhibits the excision activity and thus NER. Dephosphorylation reactivates the 5'-excision step. Phosphorylation has no effect on transcription or the 3'-5' helicase activity.

It localises to the nucleus. The catalysed reaction is Couples ATP hydrolysis with the unwinding of duplex DNA by translocating in the 3'-5' direction.. It carries out the reaction ATP + H2O = ADP + phosphate + H(+). With respect to regulation, phosphorylation on Ser-751 by CK2 controls the 5'-excision activity of ERCC1-XPF endonuclease; phosphorylated protein inhibits the excision activity and thus NER. ATPase activity is stimulated by TFIIH subunit p52 (GTF2H4). DNA translocase activity by this subunit in TFIIH is stimulated by XPA, ERCC5/XPG and XFP plus ERCC1. Its function is as follows. ATP-dependent 3'-5' DNA helicase/translocase; binds dsDNA rather than ssDNA, unzipping it in a translocase rather than classical helicase activity. Component of the general transcription and DNA repair factor IIH (TFIIH) core complex. When complexed to CDK-activating kinase (CAK), involved in RNA transcription by RNA polymerase II. The ATPase activity of XPB/ERCC3, but not its helicase activity, is required for DNA opening; it may wrap around the damaged DNA wedging it open, causing localized melting and twisting that allows XPD/ERCC2 helicase to anchor. The ATP-dependent helicase activity of XPB/ERCC3 may be required for promoter escape. Also involved in transcription-coupled nucleotide excision repair (NER) of damaged DNA. In NER, TFIIH acts by opening DNA around the lesion to allow the excision of the damaged oligonucleotide and its replacement by a new DNA fragment. The structure of the TFIIH transcription complex differs from the NER-TFIIH complex; large movements by XPD/ERCC2 and XPB/ERCC3 are stabilized by XPA. This chain is General transcription and DNA repair factor IIH helicase/translocase subunit XPB (ERCC3), found in Macaca fascicularis (Crab-eating macaque).